The following is a 522-amino-acid chain: Protein nucleotidyltransferase YdiU (522 aa).

8 residues coordinate ATP: glycine 109, glycine 111, arginine 112, lysine 132, aspartate 144, glycine 145, arginine 195, and arginine 202. Aspartate 271 serves as the catalytic Proton acceptor. 2 residues coordinate Mg(2+): asparagine 272 and aspartate 281. Aspartate 281 lines the ATP pocket.

Belongs to the SELO family. Requires Mg(2+) as cofactor. The cofactor is Mn(2+).

The enzyme catalyses L-seryl-[protein] + ATP = 3-O-(5'-adenylyl)-L-seryl-[protein] + diphosphate. It catalyses the reaction L-threonyl-[protein] + ATP = 3-O-(5'-adenylyl)-L-threonyl-[protein] + diphosphate. It carries out the reaction L-tyrosyl-[protein] + ATP = O-(5'-adenylyl)-L-tyrosyl-[protein] + diphosphate. The catalysed reaction is L-histidyl-[protein] + UTP = N(tele)-(5'-uridylyl)-L-histidyl-[protein] + diphosphate. The enzyme catalyses L-seryl-[protein] + UTP = O-(5'-uridylyl)-L-seryl-[protein] + diphosphate. It catalyses the reaction L-tyrosyl-[protein] + UTP = O-(5'-uridylyl)-L-tyrosyl-[protein] + diphosphate. Functionally, nucleotidyltransferase involved in the post-translational modification of proteins. It can catalyze the addition of adenosine monophosphate (AMP) or uridine monophosphate (UMP) to a protein, resulting in modifications known as AMPylation and UMPylation. This chain is Protein nucleotidyltransferase YdiU, found in Burkholderia orbicola (strain MC0-3).